We begin with the raw amino-acid sequence, 420 residues long: Serine hydroxymethyltransferase (420 aa).

(6S)-5,6,7,8-tetrahydrofolate-binding positions include leucine 121 and 125 to 127 (GHL). The residue at position 230 (lysine 230) is an N6-(pyridoxal phosphate)lysine. (6S)-5,6,7,8-tetrahydrofolate is bound by residues glutamate 246 and 354-356 (SPF).

Belongs to the SHMT family. Homodimer. Pyridoxal 5'-phosphate serves as cofactor.

It is found in the cytoplasm. It catalyses the reaction (6R)-5,10-methylene-5,6,7,8-tetrahydrofolate + glycine + H2O = (6S)-5,6,7,8-tetrahydrofolate + L-serine. It functions in the pathway one-carbon metabolism; tetrahydrofolate interconversion. It participates in amino-acid biosynthesis; glycine biosynthesis; glycine from L-serine: step 1/1. Its function is as follows. Catalyzes the reversible interconversion of serine and glycine with tetrahydrofolate (THF) serving as the one-carbon carrier. This reaction serves as the major source of one-carbon groups required for the biosynthesis of purines, thymidylate, methionine, and other important biomolecules. Also exhibits THF-independent aldolase activity toward beta-hydroxyamino acids, producing glycine and aldehydes, via a retro-aldol mechanism. This is Serine hydroxymethyltransferase from Rickettsia canadensis (strain McKiel).